A 368-amino-acid polypeptide reads, in one-letter code: Phosphate acyltransferase (368 aa).

The disordered stretch occupies residues 334-368 (AAPLGESGRDADGAGQASPSAGQPAEPSAALSSKT).

This sequence belongs to the PlsX family. As to quaternary structure, homodimer. Probably interacts with PlsY.

Its subcellular location is the cytoplasm. It carries out the reaction a fatty acyl-[ACP] + phosphate = an acyl phosphate + holo-[ACP]. It functions in the pathway lipid metabolism; phospholipid metabolism. In terms of biological role, catalyzes the reversible formation of acyl-phosphate (acyl-PO(4)) from acyl-[acyl-carrier-protein] (acyl-ACP). This enzyme utilizes acyl-ACP as fatty acyl donor, but not acyl-CoA. This chain is Phosphate acyltransferase, found in Burkholderia thailandensis (strain ATCC 700388 / DSM 13276 / CCUG 48851 / CIP 106301 / E264).